The following is a 193-amino-acid chain: DNA damage-inducible transcript 4-like protein (193 aa).

The protein belongs to the DDIT4 family.

It is found in the cytoplasm. Functionally, inhibits cell growth by regulating the TOR signaling pathway upstream of the TSC1-TSC2 complex and downstream of AKT1. In Pongo abelii (Sumatran orangutan), this protein is DNA damage-inducible transcript 4-like protein (DDIT4L).